Consider the following 104-residue polypeptide: Iron-sulfur cluster assembly protein CyaY (104 aa).

It belongs to the frataxin family.

In terms of biological role, involved in iron-sulfur (Fe-S) cluster assembly. May act as a regulator of Fe-S biogenesis. The chain is Iron-sulfur cluster assembly protein CyaY from Vibrio campbellii (strain ATCC BAA-1116).